We begin with the raw amino-acid sequence, 502 residues long: CBL-interacting serine/threonine-protein kinase 13 (502 aa).

The interval 32–51 (TNKETSTPESPRSPRTPQGS) is disordered. The segment covering 35-48 (ETSTPESPRSPRTP) has biased composition (low complexity). The Protein kinase domain occupies 57–311 (YEIGKLLGHG…IPEIMKHRWF (255 aa)). ATP is bound by residues 63-71 (LGHGSFAKV) and Lys86. The active-site Proton acceptor is the Asp179. The interval 197 to 226 (DFGLSVVSEQLKQEGICQTFCGTPAYLAPE) is activation loop. Position 201 is a phosphoserine (Ser201). Position 215 is a phosphothreonine (Thr215). Positions 331 to 359 (DDDNDDDDSSSLSSGRSSTASEGDAEFDI) are disordered. Low complexity predominate over residues 340-352 (SSLSSGRSSTASE). Residues 366–387 (PRPASLNAFDILSFSDLSGLFE) enclose the NAF domain. The interval 390–419 (GQGARFVSAAPMTKIISKLEEIAKEVKFMV) is PPI.

Belongs to the protein kinase superfamily. CAMK Ser/Thr protein kinase family. SNF1 subfamily. Interacts with CBL2 and CBL3. The cofactor is Mn(2+).

The catalysed reaction is L-seryl-[protein] + ATP = O-phospho-L-seryl-[protein] + ADP + H(+). It catalyses the reaction L-threonyl-[protein] + ATP = O-phospho-L-threonyl-[protein] + ADP + H(+). CIPK serine-threonine protein kinases interact with CBL proteins. Binding of a CBL protein to the regulatory NAF domain of CIPK protein lead to the activation of the kinase in a calcium-dependent manner. The chain is CBL-interacting serine/threonine-protein kinase 13 (CIPK13) from Arabidopsis thaliana (Mouse-ear cress).